The following is a 305-amino-acid chain: Olfactory receptor 4F5 (305 aa).

Over 1–18 (MVTEFIFLGLSDSQELQT) the chain is Extracellular. The chain crosses the membrane as a helical span at residues 19–42 (FLFMLFFVFYGGIVFGNLLIVITV). Residues 43–50 (VSDSHLHS) are Cytoplasmic-facing. A helical transmembrane segment spans residues 51–72 (PMYFLLANLSLIDLSLSSVTAP). The Extracellular portion of the chain corresponds to 73–93 (KMITDFFSQRKVISFKGCLVQ). A disulfide bond links C90 and C182. The chain crosses the membrane as a helical span at residues 94-113 (IFLLHFFGGSEMVILIAMGF). The Cytoplasmic segment spans residues 114–132 (DRYIAICKPLHYTTIMCGN). The helical transmembrane segment at 133 to 151 (ACVGIMAVTWGIGFLHSVS) threads the bilayer. At 152–188 (QLAFAVHLLFCGPNEVDSFYCDLPRVIKLACTDTYRL) the chain is on the extracellular side. A helical transmembrane segment spans residues 189–212 (DIMVIANSGVLTVCSFVLLIISYT). Residues 213–228 (IILMTIQHRPLDKSSK) are Cytoplasmic-facing. A helical membrane pass occupies residues 229–251 (ALSTLTAHITVVLLFFGPCVFIY). The Extracellular portion of the chain corresponds to 252 to 262 (AWPFPIKSLDK). Residues 263 to 282 (FLAVFYSVITPLLNPIIYTL) form a helical membrane-spanning segment. Residues 283–305 (RNKDMKTAIRQLRKWDAHSSVKF) lie on the Cytoplasmic side of the membrane.

It belongs to the G-protein coupled receptor 1 family.

The protein localises to the cell membrane. In terms of biological role, odorant receptor. This is Olfactory receptor 4F5 (OR4F5) from Homo sapiens (Human).